A 284-amino-acid polypeptide reads, in one-letter code: Ribosomal RNA small subunit methyltransferase A (284 aa).

S-adenosyl-L-methionine is bound by residues asparagine 33, leucine 35, glycine 60, glutamate 81, aspartate 101, and asparagine 124.

The protein belongs to the class I-like SAM-binding methyltransferase superfamily. rRNA adenine N(6)-methyltransferase family. RsmA subfamily.

Its subcellular location is the cytoplasm. The catalysed reaction is adenosine(1518)/adenosine(1519) in 16S rRNA + 4 S-adenosyl-L-methionine = N(6)-dimethyladenosine(1518)/N(6)-dimethyladenosine(1519) in 16S rRNA + 4 S-adenosyl-L-homocysteine + 4 H(+). In terms of biological role, specifically dimethylates two adjacent adenosines (A1518 and A1519) in the loop of a conserved hairpin near the 3'-end of 16S rRNA in the 30S particle. May play a critical role in biogenesis of 30S subunits. In Chlamydia felis (strain Fe/C-56) (Chlamydophila felis), this protein is Ribosomal RNA small subunit methyltransferase A.